Here is a 359-residue protein sequence, read N- to C-terminus: DNA polymerase IV (359 aa).

Positions 4–185 (IIHIDMDCYF…LPLSKIPGVG (182 aa)) constitute a UmuC domain. 2 residues coordinate Mg(2+): aspartate 8 and aspartate 103. The active site involves glutamate 104.

This sequence belongs to the DNA polymerase type-Y family. In terms of assembly, monomer. Mg(2+) serves as cofactor.

It localises to the cytoplasm. The catalysed reaction is DNA(n) + a 2'-deoxyribonucleoside 5'-triphosphate = DNA(n+1) + diphosphate. In terms of biological role, poorly processive, error-prone DNA polymerase involved in untargeted mutagenesis. Copies undamaged DNA at stalled replication forks, which arise in vivo from mismatched or misaligned primer ends. These misaligned primers can be extended by PolIV. Exhibits no 3'-5' exonuclease (proofreading) activity. May be involved in translesional synthesis, in conjunction with the beta clamp from PolIII. This Shewanella frigidimarina (strain NCIMB 400) protein is DNA polymerase IV.